Here is a 198-residue protein sequence, read N- to C-terminus: Guanylate kinase (198 aa).

One can recognise a Guanylate kinase-like domain in the interval 4–186 (PRPVVLSGPS…AYATLKQALS (183 aa)). 14-19 (GAGKST) is a binding site for ATP. 37–51 (SHTTRNPRPGEEDGK) contacts substrate. Residues Arg-44, Arg-137, and Arg-148 contribute to the active site. 171–172 (ND) is a binding site for ATP.

The protein belongs to the guanylate kinase family. As to quaternary structure, monomer. Interacts with RD3. Widely expressed. In retina is expressed in inner segment, outer nuclear layer, outer plexiform layer, inner plexiform layer, and ganglion cell layer (at protein level).

Its subcellular location is the photoreceptor inner segment. The protein localises to the cytoplasm. It is found in the cytosol. It localises to the mitochondrion. It catalyses the reaction GMP + ATP = GDP + ADP. Catalyzes the phosphorylation of GMP to GDP. Essential enzyme for recycling GMP and indirectly, cyclic GMP (cGMP). Involved in the cGMP metabolism in photoreceptors. The sequence is that of Guanylate kinase from Mus musculus (Mouse).